The sequence spans 371 residues: tRNA-specific 2-thiouridylase MnmA (371 aa).

Residues 14–21 and methionine 40 each bind ATP; that span reads GMSGGVDS. The interaction with target base in tRNA stretch occupies residues 100 to 102; sequence NPD. Cysteine 105 (nucleophile) is an active-site residue. An intrachain disulfide couples cysteine 105 to cysteine 205. Glycine 129 serves as a coordination point for ATP. The interval 155–157 is interaction with tRNA; sequence KDQ. Cysteine 205 acts as the Cysteine persulfide intermediate in catalysis. Positions 321–322 are interaction with tRNA; sequence RY.

This sequence belongs to the MnmA/TRMU family.

It localises to the cytoplasm. It carries out the reaction S-sulfanyl-L-cysteinyl-[protein] + uridine(34) in tRNA + AH2 + ATP = 2-thiouridine(34) in tRNA + L-cysteinyl-[protein] + A + AMP + diphosphate + H(+). Catalyzes the 2-thiolation of uridine at the wobble position (U34) of tRNA, leading to the formation of s(2)U34. This is tRNA-specific 2-thiouridylase MnmA from Bordetella parapertussis (strain 12822 / ATCC BAA-587 / NCTC 13253).